Consider the following 253-residue polypeptide: MLKTRIIPCLDVADGRVVKGVNFVDLRDAGDPVEAARAYDAAGADELCFLDIHATHENRGTMYDLVTRTAEQCFMPLTVGGGVRTHQDVRALLLAGADKVSFNSAAVADPTVVAEAADRFGSQCIVVAIDAKTVAPGRWEIFTHGGRRATGIDAVAFACDVASRGAGEILLTSMDRDGTRAGFNLPLTRAISDAVPIPVIASGGVGTLDHLVEGVTEGGASAVLAASIFHFGEFTIGEAKAHMASAGIPVRLA.

Catalysis depends on residues Asp-11 and Asp-130.

The protein belongs to the HisA/HisF family. In terms of assembly, heterodimer of HisH and HisF.

The protein resides in the cytoplasm. The catalysed reaction is 5-[(5-phospho-1-deoxy-D-ribulos-1-ylimino)methylamino]-1-(5-phospho-beta-D-ribosyl)imidazole-4-carboxamide + L-glutamine = D-erythro-1-(imidazol-4-yl)glycerol 3-phosphate + 5-amino-1-(5-phospho-beta-D-ribosyl)imidazole-4-carboxamide + L-glutamate + H(+). Its pathway is amino-acid biosynthesis; L-histidine biosynthesis; L-histidine from 5-phospho-alpha-D-ribose 1-diphosphate: step 5/9. Functionally, IGPS catalyzes the conversion of PRFAR and glutamine to IGP, AICAR and glutamate. The HisF subunit catalyzes the cyclization activity that produces IGP and AICAR from PRFAR using the ammonia provided by the HisH subunit. The sequence is that of Imidazole glycerol phosphate synthase subunit HisF from Cereibacter sphaeroides (strain ATCC 17029 / ATH 2.4.9) (Rhodobacter sphaeroides).